The sequence spans 257 residues: MMRWPWSSDSSDGPKPARHWNESLNKTDWEHYKEPRNWVPTAIATTTILAAVQFYRSYLRRIPGTNYIHPGFFRRRSLFGRVTSVGDGDNFHLFHTPGGRLAGWSWLRSIPTERKALKGKTIPVRIAGVDAPEAAHFGREAQPFSAEALEFLKSYILGRDVRTYIYRRDQYERVVGTVWVRRWLLRKDVGLEMIKRGLATVYDAKIGAEFGGLEEKYRAAEAKAKLKKLGMWGAKGKFESPRDYKNRHAATSESKLS.

The chain crosses the membrane as a helical span at residues 39-55 (VPTAIATTTILAAVQFY). One can recognise a TNase-like domain in the interval 76 to 234 (RSLFGRVTSV…KLKKLGMWGA (159 aa)). R125 is a catalytic residue. D130 provides a ligand contact to Ca(2+). Active-site residues include E133 and R173. Basic and acidic residues predominate over residues 236–246 (GKFESPRDYKN). Residues 236–257 (GKFESPRDYKNRHAATSESKLS) form a disordered region.

Belongs to the LCL3 family.

The protein resides in the mitochondrion. Its subcellular location is the membrane. This is Probable endonuclease LCL3 (LCL3) from Pyricularia oryzae (strain 70-15 / ATCC MYA-4617 / FGSC 8958) (Rice blast fungus).